The following is a 1016-amino-acid chain: Probable outer membrane protein PmpH (1016 aa).

A signal peptide spans 1–24 (MPFSLRSTSFCFLACLCSYSYGFA). Residues 697-1016 (GELVPNSLWV…FVSMGLNRIF (320 aa)) enclose the Autotransporter domain.

It belongs to the PMP outer membrane protein family.

It localises to the secreted. Its subcellular location is the cell wall. It is found in the cell outer membrane. The chain is Probable outer membrane protein PmpH (pmpH) from Chlamydia trachomatis serovar D (strain ATCC VR-885 / DSM 19411 / UW-3/Cx).